A 362-amino-acid polypeptide reads, in one-letter code: UDP-N-acetylglucosamine--N-acetylmuramyl-(pentapeptide) pyrophosphoryl-undecaprenol N-acetylglucosamine transferase (362 aa).

UDP-N-acetyl-alpha-D-glucosamine is bound by residues 10-12 (TAG), asparagine 124, arginine 161, serine 195, and glutamine 291.

This sequence belongs to the glycosyltransferase 28 family. MurG subfamily.

Its subcellular location is the cell membrane. It catalyses the reaction di-trans,octa-cis-undecaprenyl diphospho-N-acetyl-alpha-D-muramoyl-L-alanyl-D-glutamyl-meso-2,6-diaminopimeloyl-D-alanyl-D-alanine + UDP-N-acetyl-alpha-D-glucosamine = di-trans,octa-cis-undecaprenyl diphospho-[N-acetyl-alpha-D-glucosaminyl-(1-&gt;4)]-N-acetyl-alpha-D-muramoyl-L-alanyl-D-glutamyl-meso-2,6-diaminopimeloyl-D-alanyl-D-alanine + UDP + H(+). Its pathway is cell wall biogenesis; peptidoglycan biosynthesis. Functionally, cell wall formation. Catalyzes the transfer of a GlcNAc subunit on undecaprenyl-pyrophosphoryl-MurNAc-pentapeptide (lipid intermediate I) to form undecaprenyl-pyrophosphoryl-MurNAc-(pentapeptide)GlcNAc (lipid intermediate II). In Streptomyces collinus, this protein is UDP-N-acetylglucosamine--N-acetylmuramyl-(pentapeptide) pyrophosphoryl-undecaprenol N-acetylglucosamine transferase.